Here is a 103-residue protein sequence, read N- to C-terminus: N(4)-acetylcytidine amidohydrolase (103 aa).

The ASCH domain maps to 7–93; the sequence is TFFERFEQDI…VIAEIYPGLE (87 aa). Residue Lys21 is the Proton acceptor of the active site. Catalysis depends on Thr24, which acts as the Nucleophile. Glu74 serves as the catalytic Proton donor.

It belongs to the N(4)-acetylcytidine amidohydrolase family.

The enzyme catalyses N(4)-acetylcytidine + H2O = cytidine + acetate + H(+). It carries out the reaction N(4)-acetyl-2'-deoxycytidine + H2O = 2'-deoxycytidine + acetate + H(+). The catalysed reaction is N(4)-acetylcytosine + H2O = cytosine + acetate + H(+). Its function is as follows. Catalyzes the hydrolysis of N(4)-acetylcytidine (ac4C). This Shewanella putrefaciens (strain CN-32 / ATCC BAA-453) protein is N(4)-acetylcytidine amidohydrolase.